Reading from the N-terminus, the 326-residue chain is tRNA-modifying protein YgfZ (326 aa).

Folate-binding residues include Trp-27 and Trp-189.

This sequence belongs to the tRNA-modifying YgfZ family.

The protein localises to the cytoplasm. In terms of biological role, folate-binding protein involved in regulating the level of ATP-DnaA and in the modification of some tRNAs. It is probably a key factor in regulatory networks that act via tRNA modification, such as initiation of chromosomal replication. The chain is tRNA-modifying protein YgfZ from Salmonella paratyphi C (strain RKS4594).